A 235-amino-acid chain; its full sequence is Phosphate-specific transport system accessory protein PhoU homolog 2 (235 aa).

The protein belongs to the PhoU family. Homodimer.

It localises to the cytoplasm. Its function is as follows. Plays a role in the regulation of phosphate uptake. This is Phosphate-specific transport system accessory protein PhoU homolog 2 (phoU2) from Thermotoga maritima (strain ATCC 43589 / DSM 3109 / JCM 10099 / NBRC 100826 / MSB8).